The primary structure comprises 337 residues: Ferredoxin--NADP reductase (337 aa).

7 residues coordinate FAD: D33, Q41, Y46, A86, F120, D286, and T327.

The protein belongs to the ferredoxin--NADP reductase type 2 family. As to quaternary structure, homodimer. The cofactor is FAD.

The enzyme catalyses 2 reduced [2Fe-2S]-[ferredoxin] + NADP(+) + H(+) = 2 oxidized [2Fe-2S]-[ferredoxin] + NADPH. The protein is Ferredoxin--NADP reductase of Rickettsia canadensis (strain McKiel).